A 381-amino-acid chain; its full sequence is Tumor necrosis factor receptor superfamily member 10B (381 aa).

The first 52 residues, 1–52 (MEPPGPSTPTASAAARADHYTPGLRPLPKRRLLYSFALLLAVLQAVFVPVTA), serve as a signal peptide directing secretion. 3 TNFR-Cys repeats span residues 26 to 86 (PLPK…GNCK), 87 to 129 (PCRE…NTVC), and 130 to 169 (RCKP…NRKC). Residues 53-180 (NPAHNRPAGL…SKTAWASWHK (128 aa)) are Extracellular-facing. 7 disulfide bridges follow: C74-C85, C88-C105, C108-C121, C111-C129, C131-C145, C148-C161, and C151-C169. The helical transmembrane segment at 181-201 (LGLWIGLLVPVVLLIGALLVW) threads the bilayer. Residues 202 to 381 (KTGAWRQWLL…ETGPGGSQCV (180 aa)) lie on the Cytoplasmic side of the membrane. Positions 228–260 (HSSLLDRQTSSTTNDSNHNTEPGKTQKTGKKLL) are disordered. A compositionally biased stretch (low complexity) spans 236-247 (TSSTTNDSNHNT). The 84-residue stretch at 273 to 356 (KFIFEYCSDI…DAMEKIEDYA (84 aa)) folds into the Death domain. A (Microbial infection) N-beta-linked (GlcNAc) arginine glycan is attached at R293.

In terms of assembly, monomer. Can interact with TRADD and RIPK1. Three TNFRSF10B molecules interact with the TNFSF10 homotrimer. In the absence of stimulation, interacts with BIRC2, DDX3X and GSK3B. The interaction with BIRC2 and DDX3X is further enhanced upon receptor stimulation and accompanied by DDX3X and BIRC2 cleavage. (Microbial infection) Glycosylated at Arg-293 by S.typhimurium protein Ssek3. As to expression, highly expressed in heart, lung and kidney.

The protein resides in the membrane. Functionally, receptor for the cytotoxic ligand TNFSF10/TRAIL. The adapter molecule FADD recruits caspase-8 to the activated receptor. The resulting death-inducing signaling complex (DISC) performs caspase-8 proteolytic activation which initiates the subsequent cascade of caspases (aspartate-specific cysteine proteases) mediating apoptosis. Promotes the activation of NF-kappa-B. Essential for ER stress-induced apoptosis. In Mus musculus (Mouse), this protein is Tumor necrosis factor receptor superfamily member 10B (Tnfrsf10b).